The following is a 915-amino-acid chain: Probable inorganic carbon transporter subunit DabA (915 aa).

Zn(2+)-binding residues include Cys-392, Asp-394, His-566, and Cys-581.

The protein belongs to the inorganic carbon transporter (TC 9.A.2) DabA family. Forms a complex with DabB. Zn(2+) is required as a cofactor.

The protein resides in the cell inner membrane. In terms of biological role, part of an energy-coupled inorganic carbon pump. This chain is Probable inorganic carbon transporter subunit DabA, found in Nitrosospira multiformis (strain ATCC 25196 / NCIMB 11849 / C 71).